We begin with the raw amino-acid sequence, 89 residues long: DNA-binding protein HU (89 aa).

This sequence belongs to the bacterial histone-like protein family. In terms of assembly, homodimer. The dimer interacts with the DNA mimic protein DMP12. It also interacts with the monomeric form of the DNA mimic protein DMP19 with 1:1 stoichiometry.

Its activity is regulated as follows. Activity is regulated by the DNA mimic protein DMP12. Activity is inhibited in the presence of the DNA mimic protein DMP19, which interacts with HU and prevents the binding of HU to DNA. Histone-like DNA-binding protein which is capable of wrapping DNA to stabilize it, and thus to prevent its denaturation under extreme environmental conditions. This is DNA-binding protein HU from Neisseria meningitidis serogroup B (strain ATCC BAA-335 / MC58).